Here is a 260-residue protein sequence, read N- to C-terminus: Thymidylate synthase (260 aa).

It participates in pyrimidine metabolism; dTTP biosynthesis. Functionally, is able to catalyze the biosynthesis of dTMP using dUMP, tetrahydrofolate and formaldehyde in vitro, i.e. a reaction equivalent to that catalyzed by bacterial thymidylate synthases (EC 2.1.1.45). However, M.jannaschii like most methanogenic Archaea lacks folates, thus the physiological cosubstrate is unknown but is likely one of the non-methylated methanopterin biosynthetic intermediates. The protein is Thymidylate synthase of Methanocaldococcus jannaschii (strain ATCC 43067 / DSM 2661 / JAL-1 / JCM 10045 / NBRC 100440) (Methanococcus jannaschii).